A 479-amino-acid chain; its full sequence is Zinc metalloproteinase/disintegrin (479 aa).

Residues 1-20 (MIQVLLVTICLAAFPYQGSS) form the signal peptide. A propeptide spanning residues 21-187 (IILESGKVND…PIKKASQLIV (167 aa)) is cleaved from the precursor. The Peptidase M12B domain maps to 193-390 (RYMEIVIVVD…ENPPCILNKP (198 aa)). Ca(2+)-binding residues include Glu196 and Asp280. Intrachain disulfides connect Cys304–Cys385, Cys344–Cys369, and Cys346–Cys352. Zn(2+) is bound at residue His329. Residue Glu330 is part of the active site. Positions 333 and 339 each coordinate Zn(2+). Ca(2+)-binding residues include Cys385 and Asn388. Residues 390–414 (PLRTDTVSTPVSGNELLEAGKDYDR) constitute a propeptide that is removed on maturation. Residues 398–479 (TPVSGNELLE…ADCPRNPYHA (82 aa)) form the Disintegrin domain. 3 disulfides stabilise this stretch: Cys435-Cys441, Cys440-Cys465, and Cys453-Cys472. The Cell attachment site motif lies at 457–459 (RGD).

This sequence belongs to the venom metalloproteinase (M12B) family. P-II subfamily. P-IIa sub-subfamily. As to quaternary structure, monomer. Zn(2+) is required as a cofactor. In terms of tissue distribution, expressed by the venom gland.

It localises to the secreted. In terms of biological role, snake venom metalloproteinase that impairs hemostasis in the envenomed animal. Inhibits platelet aggregation induced by ADP, thrombin, platelet-activating factor and collagen. Acts by inhibiting fibrinogen interaction with platelet receptors GPIIb/GPIIIa (ITGA2B/ITGB3). The chain is Zinc metalloproteinase/disintegrin from Deinagkistrodon acutus (Hundred-pace snake).